We begin with the raw amino-acid sequence, 444 residues long: Jacalin-related lectin 42 (444 aa).

Position 2 is an N-acetylalanine (A2). 3 consecutive Jacalin-type lectin domains span residues 2 to 143 (ALMV…YYIR), 146 to 289 (ATKS…YYAP), and 297 to 441 (TEKL…HVIP).

It belongs to the jacalin lectin family.

This chain is Jacalin-related lectin 42 (JAL42), found in Arabidopsis thaliana (Mouse-ear cress).